The sequence spans 616 residues: Chaperone protein HscA (616 aa).

It belongs to the heat shock protein 70 family.

Its function is as follows. Chaperone involved in the maturation of iron-sulfur cluster-containing proteins. Has a low intrinsic ATPase activity which is markedly stimulated by HscB. Involved in the maturation of IscU. This is Chaperone protein HscA from Salmonella enteritidis PT4 (strain P125109).